The chain runs to 467 residues: L-seryl-tRNA(Sec) selenium transferase (467 aa).

Lys-298 is modified (N6-(pyridoxal phosphate)lysine).

This sequence belongs to the SelA family. It depends on pyridoxal 5'-phosphate as a cofactor.

It is found in the cytoplasm. It carries out the reaction L-seryl-tRNA(Sec) + selenophosphate + H(+) = L-selenocysteinyl-tRNA(Sec) + phosphate. It participates in aminoacyl-tRNA biosynthesis; selenocysteinyl-tRNA(Sec) biosynthesis; selenocysteinyl-tRNA(Sec) from L-seryl-tRNA(Sec) (bacterial route): step 1/1. In terms of biological role, converts seryl-tRNA(Sec) to selenocysteinyl-tRNA(Sec) required for selenoprotein biosynthesis. This chain is L-seryl-tRNA(Sec) selenium transferase, found in Alkaliphilus metalliredigens (strain QYMF).